Here is a 266-residue protein sequence, read N- to C-terminus: Tropinone reductase homolog At1g07440 (266 aa).

Leu-18–His-42 lines the NADP(+) pocket. Ser-151 serves as a coordination point for substrate. Tyr-164 serves as the catalytic Proton acceptor.

This sequence belongs to the short-chain dehydrogenases/reductases (SDR) family. SDR65C subfamily.

This Arabidopsis thaliana (Mouse-ear cress) protein is Tropinone reductase homolog At1g07440.